Here is a 164-residue protein sequence, read N- to C-terminus: ATP synthase subunit b (164 aa).

A helical membrane pass occupies residues 6–26 (GELVGNFILVTGSVIVLLLLI).

Belongs to the ATPase B chain family. As to quaternary structure, F-type ATPases have 2 components, F(1) - the catalytic core - and F(0) - the membrane proton channel. F(1) has five subunits: alpha(3), beta(3), gamma(1), delta(1), epsilon(1). F(0) has three main subunits: a(1), b(2) and c(10-14). The alpha and beta chains form an alternating ring which encloses part of the gamma chain. F(1) is attached to F(0) by a central stalk formed by the gamma and epsilon chains, while a peripheral stalk is formed by the delta and b chains.

It localises to the cell membrane. Functionally, f(1)F(0) ATP synthase produces ATP from ADP in the presence of a proton or sodium gradient. F-type ATPases consist of two structural domains, F(1) containing the extramembraneous catalytic core and F(0) containing the membrane proton channel, linked together by a central stalk and a peripheral stalk. During catalysis, ATP synthesis in the catalytic domain of F(1) is coupled via a rotary mechanism of the central stalk subunits to proton translocation. Its function is as follows. Component of the F(0) channel, it forms part of the peripheral stalk, linking F(1) to F(0). The chain is ATP synthase subunit b from Streptococcus pyogenes serotype M6 (strain ATCC BAA-946 / MGAS10394).